Here is a 334-residue protein sequence, read N- to C-terminus: GTPase Obg (334 aa).

Residues 1–159 (MRFVDEVVIK…KEVRLELNLL (159 aa)) enclose the Obg domain. One can recognise an OBG-type G domain in the interval 160-331 (ADVALLGLPN…LAKKLNEFLQ (172 aa)). Residues 166–173 (GLPNAGKS), 191–195 (FTTMY), 212–215 (DIPG), 282–285 (NKID), and 312–314 (SAA) contribute to the GTP site. The Mg(2+) site is built by Ser-173 and Thr-193.

This sequence belongs to the TRAFAC class OBG-HflX-like GTPase superfamily. OBG GTPase family. Monomer. Mg(2+) serves as cofactor.

The protein localises to the cytoplasm. In terms of biological role, an essential GTPase which binds GTP, GDP and possibly (p)ppGpp with moderate affinity, with high nucleotide exchange rates and a fairly low GTP hydrolysis rate. Plays a role in control of the cell cycle, stress response, ribosome biogenesis and in those bacteria that undergo differentiation, in morphogenesis control. This is GTPase Obg from Francisella tularensis subsp. holarctica (strain FTNF002-00 / FTA).